The following is an 89-amino-acid chain: Small ribosomal subunit protein bS20 (89 aa).

It belongs to the bacterial ribosomal protein bS20 family.

Binds directly to 16S ribosomal RNA. In Helicobacter pylori (strain Shi470), this protein is Small ribosomal subunit protein bS20.